A 477-amino-acid chain; its full sequence is MSRWSTALQLTDIDDFITPSQICIKPVQIDKARSKTGAKIKIKGDSCFEESESGNLKLNKVDISLQDCLACSGCITSAEEVLITQQSQEELLKILQENSKNKASEDWDNVRTIVITLATQPLLSLAHRYQIGVEDAARHLNGYFRSLGADYVLSTKVADDIALLECRQEFVDRYRENENLTMLSSSCPGWVCYAEKTHGNFILPYVSTTRSPQQIMGVLVKQILADKINVPASRIYHVTVMPCYDKKLEASREDFFSKANNSRDVDCVITSVEVEQLLSEAQRPLSQYDLFDLDWPWSNVRPEFMVWAHEKTQSGGYAEHIFKFAAKHIFNEDLTTELEFKQLKNRDFREIILKQNGKTVLKFAIANGFRNIQNLVQKLKREKLSNYHFVEVMACPSGCINGGAQIRPTTGQHVRELTRKLEELYHNLPRSEPENSLTKHIYNDFLDGFQTDKSYEMLHTRYHDVVSDLSISLNINW.

The [4Fe-4S] cluster site is built by Cys-23, Cys-68, Cys-71, Cys-74, Cys-187, Cys-243, Cys-395, and Cys-399.

The protein belongs to the NARF family.

Functionally, component of the cytosolic iron-sulfur (Fe/S) protein assembly machinery. Required for maturation of extramitochondrial Fe/S proteins. The sequence is that of Probable cytosolic Fe-S cluster assembly factor GM20417 from Drosophila sechellia (Fruit fly).